The sequence spans 370 residues: Dual-specificity RNA methyltransferase RlmN (370 aa).

The active-site Proton acceptor is E93. The region spanning E99 to D337 is the Radical SAM core domain. C106 and C343 are oxidised to a cystine. [4Fe-4S] cluster contacts are provided by C113, C117, and C120. Residues G167–E168, S199, S221–H223, and N300 each bind S-adenosyl-L-methionine. C343 (S-methylcysteine intermediate) is an active-site residue.

The protein belongs to the radical SAM superfamily. RlmN family. [4Fe-4S] cluster serves as cofactor.

The protein resides in the cytoplasm. The enzyme catalyses adenosine(2503) in 23S rRNA + 2 reduced [2Fe-2S]-[ferredoxin] + 2 S-adenosyl-L-methionine = 2-methyladenosine(2503) in 23S rRNA + 5'-deoxyadenosine + L-methionine + 2 oxidized [2Fe-2S]-[ferredoxin] + S-adenosyl-L-homocysteine. The catalysed reaction is adenosine(37) in tRNA + 2 reduced [2Fe-2S]-[ferredoxin] + 2 S-adenosyl-L-methionine = 2-methyladenosine(37) in tRNA + 5'-deoxyadenosine + L-methionine + 2 oxidized [2Fe-2S]-[ferredoxin] + S-adenosyl-L-homocysteine. Functionally, specifically methylates position 2 of adenine 2503 in 23S rRNA and position 2 of adenine 37 in tRNAs. m2A2503 modification seems to play a crucial role in the proofreading step occurring at the peptidyl transferase center and thus would serve to optimize ribosomal fidelity. This Francisella tularensis subsp. tularensis (strain WY96-3418) protein is Dual-specificity RNA methyltransferase RlmN.